A 543-amino-acid polypeptide reads, in one-letter code: CTP synthase (543 aa).

An amidoligase domain region spans residues methionine 1 to leucine 267. Serine 15 lines the CTP pocket. Position 15 (serine 15) interacts with UTP. Residues serine 16–isoleucine 21 and aspartate 73 contribute to the ATP site. Positions 73 and 141 each coordinate Mg(2+). Residues aspartate 148 to glutamate 150, lysine 188 to glutamine 193, and lysine 224 contribute to the CTP site. Residues lysine 188–glutamine 193 and lysine 224 each bind UTP. Residues lysine 292 to asparagine 543 enclose the Glutamine amidotransferase type-1 domain. L-glutamine is bound at residue glycine 354. Cysteine 381 (nucleophile; for glutamine hydrolysis) is an active-site residue. L-glutamine-binding positions include leucine 382–glutamine 385, glutamate 405, and arginine 473. Catalysis depends on residues histidine 516 and glutamate 518.

Belongs to the CTP synthase family. Homotetramer.

The enzyme catalyses UTP + L-glutamine + ATP + H2O = CTP + L-glutamate + ADP + phosphate + 2 H(+). It carries out the reaction L-glutamine + H2O = L-glutamate + NH4(+). It catalyses the reaction UTP + NH4(+) + ATP = CTP + ADP + phosphate + 2 H(+). It participates in pyrimidine metabolism; CTP biosynthesis via de novo pathway; CTP from UDP: step 2/2. Its activity is regulated as follows. Allosterically activated by GTP, when glutamine is the substrate; GTP has no effect on the reaction when ammonia is the substrate. The allosteric effector GTP functions by stabilizing the protein conformation that binds the tetrahedral intermediate(s) formed during glutamine hydrolysis. Inhibited by the product CTP, via allosteric rather than competitive inhibition. Its function is as follows. Catalyzes the ATP-dependent amination of UTP to CTP with either L-glutamine or ammonia as the source of nitrogen. Regulates intracellular CTP levels through interactions with the four ribonucleotide triphosphates. The polypeptide is CTP synthase (Campylobacter jejuni subsp. jejuni serotype O:2 (strain ATCC 700819 / NCTC 11168)).